We begin with the raw amino-acid sequence, 997 residues long: MGVAGCGRPREARALLLLLLLLPPLLAAAVPPDRGLTNGPSEDVDECAQGLDDCHADALCQNTPTSYKCSCKPGYQGEGRQCEDMDECDNTLNGGCVHDCLNIPGNYRCTCFDGFMLAHDGHNCLDMDECLENNGGCQHICTNVIGSYECRCKEGFFLSDNQHTCIHRSEEGLSCMNKDHGCGHICKEAPRGSVACECRPGFELAKNQKDCILTCNHGNGGCQHSCEDTAEGPECSCHPRYRLHADGRSCLEQEGTVLEGTESNATSVADGDKRVKRRLLMETCAVNNGGCDRTCKDTSTGVHCSCPTGFTLQVDGKTCKDIDECQTRNGGCNHFCKNTVGSFDCSCKKGFKLLTDEKSCQDVDECSLERTCDHSCINHPGTFICACNPGYTLYSFTHCGDTNECSVNNGGCQQVCINTVGSYECQCHPGFKLHWNKKDCVEVKGFPPTSMTPRVSLHCGKSGGGDRCFLRCRSGIHLSSDVVTVRTSVTFKLNEGKCSLQKAKLSPEGLRPALPERHSSVKESFQYANLTCSPGKQVPGALGRLNAPKEMFITVEFERETYEKEVTASCNLSCVVKRTEKRLRKALRTLKRAAHREQFHLQLSGMDLDMAKTPSRVSGQHEETCGVGQGHEESQCVSCRAGTYYDGSQERCILCPNGTFQNEEGQVTCEPCPRPENLGSLKISEAWNVSDCGGLCQPGEYSANGFAPCQLCALGTFQPDVGRTSCLSCGGGLPTKHLGATSFQDCETRVQCSPGHFYNTTTHRCIRCPLGTYQPEFGKNNCVSCPGNTTTDFDGSTNITQCKNRKCGGELGDFTGYIESPNYPGNYPANSECTWTINPPPKRRILIVVPEIFLPIEDDCGDYLVMRKTSSSNSVTTYETCQTYERPIAFTSRSKKLWIQFKSNEGNSARGFQVPYVTYDEDYQELIEDIVRDGRLYASENHQEILKDKKLIKALFDVLAHPQNYFKYTAQESREMFPRSFIRLLRSKVSRFLRPYK.

Positions 1–28 (MGVAGCGRPREARALLLLLLLLPPLLAA) are cleaved as a signal peptide. One can recognise an EGF-like 1; calcium-binding domain in the interval 43-83 (DVDECAQGLDDCHADALCQNTPTSYKCSCKPGYQGEGRQCE). 8 disulfide bridges follow: C47/C60, C54/C69, C71/C82, C88/C100, C96/C109, C111/C124, C130/C141, and C137/C150. The EGF-like 2; calcium-binding domain occupies 84–125 (DMDECDNTLNGGCVHDCLNIPGNYRCTCFDGFMLAHDGHNCL). An EGF-like 3; calcium-binding domain is found at 126-162 (DMDECLENNGGCQHICTNVIGSYECRCKEGFFLSDNQ). 3 EGF-like domains span residues 175-211 (CMNK…QKDC), 215-250 (CNHG…GRSC), and 284-319 (CAVN…GKTC). One can recognise an EGF-like 7; calcium-binding domain in the interval 321–361 (DIDECQTRNGGCNHFCKNTVGSFDCSCKKGFKLLTDEKSCQ). Disulfide bonds link C325–C336, C332–C345, C347–C360, C366–C376, C372–C385, C387–C399, C405–C416, C412–C425, and C427–C440. The 39-residue stretch at 362–400 (DVDECSLERTCDHSCINHPGTFICACNPGYTLYSFTHCG) folds into the EGF-like 8; calcium-binding domain. The EGF-like 9; calcium-binding domain occupies 401–441 (DTNECSVNNGGCQQVCINTVGSYECQCHPGFKLHWNKKDCV). N657 carries an N-linked (GlcNAc...) asparagine glycan. C807 and C833 are oxidised to a cystine. Residues 807-919 (CGGELGDFTG…RGFQVPYVTY (113 aa)) enclose the CUB domain. The tract at residues 845 to 854 (ILIVVPEIFL) is interaction with the cholesterol-anchor of SHH. A disulfide bridge links C860 with C881.

As to quaternary structure, interacts with SHH via the cholesterol anchor of the dually lipid-modified SHH (ShhNp). Interacts with PTCH1. Forms homooligomers and heterooligomers with SCUBE1 and SCUBE3. Interacts with VEGFR2. N-glycosylated. Expressed in adult heart, lung and testis.

The protein localises to the secreted. Its subcellular location is the cell surface. In terms of biological role, lipid-binding protein required for SHH long-range signaling by binding to the dually lipid-modified SHH (ShhNp) and by promoting ShhNp mobilization, solubilization and release from the cell membrane. Acts by enhancing the proteolytic processing (shedding) of the lipid-modified N- and C- terminal of ShhNp at the cell surface. Synergizes with DISP1 to cause an increase in SHH secretion. Probable cell surface coreceptor for VEGFR2 involved in VEGFR2-mediated angiogenesis. The sequence is that of Signal peptide, CUB and EGF-like domain-containing protein 2 from Mus musculus (Mouse).